The following is a 400-amino-acid chain: Formate-dependent phosphoribosylglycinamide formyltransferase (400 aa).

Residues 22–23 (EL) and E82 contribute to the N(1)-(5-phospho-beta-D-ribosyl)glycinamide site. ATP is bound by residues R115, K156, 161–166 (SSGKGQ), 196–199 (EGFI), and E204. The ATP-grasp domain maps to 120-309 (RLAAETLCLP…EFALHARAIL (190 aa)). Residues E268 and E280 each coordinate Mg(2+). Residues D287, K361, and 368–369 (RR) contribute to the N(1)-(5-phospho-beta-D-ribosyl)glycinamide site.

The protein belongs to the PurK/PurT family. Homodimer.

The enzyme catalyses N(1)-(5-phospho-beta-D-ribosyl)glycinamide + formate + ATP = N(2)-formyl-N(1)-(5-phospho-beta-D-ribosyl)glycinamide + ADP + phosphate + H(+). It participates in purine metabolism; IMP biosynthesis via de novo pathway; N(2)-formyl-N(1)-(5-phospho-D-ribosyl)glycinamide from N(1)-(5-phospho-D-ribosyl)glycinamide (formate route): step 1/1. Involved in the de novo purine biosynthesis. Catalyzes the transfer of formate to 5-phospho-ribosyl-glycinamide (GAR), producing 5-phospho-ribosyl-N-formylglycinamide (FGAR). Formate is provided by PurU via hydrolysis of 10-formyl-tetrahydrofolate. This is Formate-dependent phosphoribosylglycinamide formyltransferase from Xanthomonas euvesicatoria pv. vesicatoria (strain 85-10) (Xanthomonas campestris pv. vesicatoria).